The chain runs to 427 residues: Protein phosphatase methylesterase 1 (427 aa).

The tract at residues 1–49 (MSELQKSFAKAKLAKLPPEAPPFSMHPPRDEDDSESASSTGTVVPSPSR) is disordered. Polar residues predominate over residues 36-49 (SASSTGTVVPSPSR). Catalysis depends on residues Ser207, Asp233, and His364. Residues 402–427 (SAAMKQGAEAGAVPPFGRGQGSSHKP) form a disordered region.

The protein belongs to the AB hydrolase superfamily.

It catalyses the reaction [phosphatase 2A protein]-C-terminal L-leucine methyl ester + H2O = [phosphatase 2A protein]-C-terminal L-leucine + methanol + H(+). In terms of biological role, demethylates proteins that have been reversibly carboxymethylated. Demethylates the phosphatase PP2A catalytic subunit. This is Protein phosphatase methylesterase 1 (ppe1) from Aspergillus oryzae (strain ATCC 42149 / RIB 40) (Yellow koji mold).